The following is a 436-amino-acid chain: UPF0597 protein YhaM (436 aa).

The protein belongs to the UPF0597 family.

This chain is UPF0597 protein YhaM, found in Shigella flexneri serotype 5b (strain 8401).